We begin with the raw amino-acid sequence, 351 residues long: MLETLRERLLSVQQDFTSGLKTLSDKSREAKVKSKPRTVPFLPKYSAGLELLSRYEDTWAALHRRAKDCASAGELVDSEVVMLSAHWEKKKTSLVELQEQLQQLPALIADLESMTANLTHLEASFEEVENNLLHLEDLCGQCELERCKHMQSQQLENYKKNKRKELETFKAELDAEHAQKVLEMEHTQQMKLKERQKFFEEAFQQDMEQYLSTGYLQIAERREPIGSMSSMEVNVDMLEQMDLMDISDQEALDVFLNSGGEENTVLSPALGPESSTCQNEITLQVPNPSELRAKPPSSSSTCTDSATRDISEGGESPVVQSDEEEVQVDTALATSHTDREATPDGGEDSDS.

Ser-11 bears the Phosphoserine mark. Residues 88 to 181 (EKKKTSLVEL…ELDAEHAQKV (94 aa)) adopt a coiled-coil conformation. The dysbindin stretch occupies residues 173 to 331 (LDAEHAQKVL…DEEEVQVDTA (159 aa)). Positions 243 to 256 (LMDISDQEALDVFL) match the Nuclear export signal motif. The disordered stretch occupies residues 286 to 351 (PNPSELRAKP…TPDGGEDSDS (66 aa)). Polar residues predominate over residues 296–305 (PSSSSTCTDS). Residues Ser-316, Ser-321, and Ser-349 each carry the phosphoserine modification.

This sequence belongs to the dysbindin family. Interacts (via its coiled coil domain) with KXD1. Interacts with CMYA5, PI4K2 and RNF151. Component of the biogenesis of lysosome-related organelles complex 1 (BLOC-1) composed of at least BLOC1S1, BLOC1S2, BLOC1S3, BLOC1S4, BLOC1S5, BLOC1S6, DTNBP1/BLOC1S7 and SNAPIN/BLOC1S8. Interacts directly in the complex with BLOC1S5, BLOC1S6 and SNAPIN/BLOC1S8. The BLOC-1 complex associates with the AP-3 protein complex and membrane protein cargos. This BLOC-1 complex also associates with the BLOC-2 complex in endosomes. Binds to DTNA and DTNB but may not be a physiological binding partner. Interacts (isoform 1 and isoform 2 only) with the DNA-dependent protein kinase complex DNA-PK; the interaction phosphorylates DTNBP1 in vitro. Interacts directly in this complex with XRCC5 and XRCC6. Interacts with AP3M1, AP3B2 and TRIM32. Interacts with XPO1; the interaction exports DTNBP1 out of the nucleus. In terms of processing, ubiquitinated by TRIM32. Ubiquitination leads to DTNBP1 degradation. Isoforms 1 and 2 highly phosphorylated by PRKDC in vitro. Isoform 3 only weakly phosphorylated by PRKDC in vitro. As to expression, detected in brain, in neurons and in neuropil. Isoform 1 is expressed in the cerebral cortex, and hippocampal frontal (HF). Specific expression in the posterior half of the superior temporal gyrus (pSTG). Higher expression of isoform 2 and 3 in the HF than in the pSTG while isoform 1 shows no difference in expression in these areas. In the HF, detected in dentate gyrus (DG) and in pyramidal cells of hippocampus CA2 and CA3 (at protein level). Expressed in all principal neuronal populations of the HF, namely pyramidal neurons in the subiculum and CA1-3, granule cells in the dense cell layer of the DG (DGg), and polymorph cells in the hilus of the DG (DGh). Maximal levels in CA2, CA3, and DGh. Isoform 2 not expressed in the cerebral cortex.

The protein localises to the cytoplasm. Its subcellular location is the cytoplasmic vesicle membrane. It localises to the endosome membrane. The protein resides in the melanosome membrane. It is found in the postsynaptic density. The protein localises to the endoplasmic reticulum. Its subcellular location is the nucleus. It localises to the cytoplasmic vesicle. The protein resides in the secretory vesicle. It is found in the synaptic vesicle membrane. The protein localises to the postsynaptic cell membrane. In terms of biological role, component of the BLOC-1 complex, a complex that is required for normal biogenesis of lysosome-related organelles (LRO), such as platelet dense granules and melanosomes. In concert with the AP-3 complex, the BLOC-1 complex is required to target membrane protein cargos into vesicles assembled at cell bodies for delivery into neurites and nerve terminals. The BLOC-1 complex, in association with SNARE proteins, is also proposed to be involved in neurite extension. Associates with the BLOC-2 complex to facilitate the transport of TYRP1 independent of AP-3 function. Plays a role in synaptic vesicle trafficking and in neurotransmitter release. Plays a role in the regulation of cell surface exposure of DRD2. May play a role in actin cytoskeleton reorganization and neurite outgrowth. May modulate MAPK8 phosphorylation. Appears to promote neuronal transmission and viability through regulating the expression of SNAP25 and SYN1, modulating PI3-kinase-Akt signaling and influencing glutamatergic release. Regulates the expression of SYN1 through binding to its promoter. Modulates prefrontal cortical activity via the dopamine/D2 pathway. The sequence is that of Dysbindin (DTNBP1) from Homo sapiens (Human).